The sequence spans 210 residues: Oligoribonuclease (210 aa).

Residues 12–177 (LVWIDLEMTG…ADIVESIREL (166 aa)) form the Exonuclease domain. The active site involves Tyr-134.

Belongs to the oligoribonuclease family.

The protein localises to the cytoplasm. In terms of biological role, 3'-to-5' exoribonuclease specific for small oligoribonucleotides. This Corynebacterium diphtheriae (strain ATCC 700971 / NCTC 13129 / Biotype gravis) protein is Oligoribonuclease.